Consider the following 64-residue polypeptide: Small ribosomal subunit protein bS21 (64 aa).

Residues 26–64 (DGILSEARRRTRFERPPTRRKRKDAAKRRLAIKAARKAT) form a disordered region. Positions 43–64 (TRRKRKDAAKRRLAIKAARKAT) are enriched in basic residues.

The protein belongs to the bacterial ribosomal protein bS21 family.

This chain is Small ribosomal subunit protein bS21, found in Dehalococcoides mccartyi (strain ATCC BAA-2100 / JCM 16839 / KCTC 5957 / BAV1).